The chain runs to 466 residues: UDP-N-acetylmuramoylalanine--D-glutamate ligase (466 aa).

127–133 (GSNGKST) lines the ATP pocket.

This sequence belongs to the MurCDEF family.

It localises to the cytoplasm. It catalyses the reaction UDP-N-acetyl-alpha-D-muramoyl-L-alanine + D-glutamate + ATP = UDP-N-acetyl-alpha-D-muramoyl-L-alanyl-D-glutamate + ADP + phosphate + H(+). It participates in cell wall biogenesis; peptidoglycan biosynthesis. In terms of biological role, cell wall formation. Catalyzes the addition of glutamate to the nucleotide precursor UDP-N-acetylmuramoyl-L-alanine (UMA). This chain is UDP-N-acetylmuramoylalanine--D-glutamate ligase, found in Ruegeria pomeroyi (strain ATCC 700808 / DSM 15171 / DSS-3) (Silicibacter pomeroyi).